Consider the following 452-residue polypeptide: Glycine receptor subunit alpha-2 (452 aa).

A signal peptide spans 1 to 27 (MYRQLVNILTALFAFFLGTNHFREAFC). Over 28 to 256 (KDHDSRSGKH…KFHLERQMGY (229 aa)) the chain is Extracellular. Residue asparagine 72 is glycosylated (N-linked (GlcNAc...) asparagine). Arginine 99 contacts glycine. Residue arginine 99 participates in strychnine binding. Asparagine 103 carries N-linked (GlcNAc...) asparagine glycosylation. A glycine-binding site is contributed by serine 163. Cysteine 172 and cysteine 186 are oxidised to a cystine. Residues glutamate 226 and glutamate 228 each coordinate Zn(2+). Cysteines 232 and 243 form a disulfide. Glycine is bound at residue threonine 238. Histidine 249 contributes to the Zn(2+) binding site. The chain crosses the membrane as a helical span at residues 257–278 (YLIQMYIPSLLIVILSWVSFWI). Residues 279 to 283 (NMDAA) are Cytoplasmic-facing. The helical transmembrane segment at 284–304 (PARVALGITTVLTMTTQSSGS) threads the bilayer. Topologically, residues 305–315 (RASLPKVSYVK) are extracellular. Residues 316-336 (AIDIWMAVCLLFVFAALLEYA) form a helical membrane-spanning segment. Over 337 to 420 (AVNFVSRQHK…FVDRAKRIDT (84 aa)) the chain is Cytoplasmic. Residues 421–441 (ISRAAFPLAFLIFNIFYWITY) form a helical membrane-spanning segment. Over 442 to 452 (KIIRHEDVHKK) the chain is Extracellular.

Belongs to the ligand-gated ion channel (TC 1.A.9) family. Glycine receptor (TC 1.A.9.3) subfamily. GLRA2 sub-subfamily. As to quaternary structure, interacts with GLRB. Heteropentamer composed of GLRA2 and GLRB; functional GLRB-GLRA2 heteropentamers contain four GLRA2 subunits and one GLRB subunit, although alternative subunit composition cannot be excluded. Homopentamer (in vitro). Both homopentamers and heteropentamers form functional ion channels, but their characteristics are subtly different. In terms of tissue distribution, detected in the retina inner plexiform layer (at protein level). Detected in neonate retina. Detected in brain. Detected in spinal cord, with higher levels in the dorsal horn.

It localises to the postsynaptic cell membrane. The protein resides in the synapse. It is found in the cell membrane. The protein localises to the cell projection. The catalysed reaction is chloride(in) = chloride(out). Its activity is regulated as follows. Channel opening is triggered by extracellular glycine. Channel opening is also triggered by taurine and beta-alanine. Inhibited by strychnine. Inhibited by picrotoxin. Functionally, subunit of heteromeric glycine-gated chloride channels. Plays a role in synaptic plasticity. Contributes to the generation of inhibitory postsynaptic currents, and is involved in the down-regulation of neuronal excitability. Plays a role in cellular responses to ethanol. The sequence is that of Glycine receptor subunit alpha-2 from Mus musculus (Mouse).